We begin with the raw amino-acid sequence, 1459 residues long: Mediator of RNA polymerase II transcription subunit 14 (1459 aa).

The interval 1–37 (MAPVQLDNHQLIPPGGGGGSSGGGGSSSGSASAPAPP) is disordered. Positions 14 to 27 (PGGGGGSSGGGGSS) are enriched in gly residues. The short motif at 75-79 (LTDLL) is the LXXLL motif 1 element. Residues 194–572 (KQATLHQLNQ…VPNKPTQLSY (379 aa)) form an interaction with STAT2 region. An interaction with SREBF1 region spans residues 506–830 (LGQQRCKQSI…TKGSSISIQW (325 aa)). Serine 623 and serine 992 each carry phosphoserine. A disordered region spans residues 979–1171 (ARRRSVNEDD…NMPPPRKLPQ (193 aa)). Polar residues-rich tracts occupy residues 1029–1059 (PPTS…SSPS) and 1097–1106 (DPSSPYTMVS). A phosphoserine mark is found at serine 1117, serine 1124, serine 1133, serine 1141, and serine 1149. Polar residues predominate over residues 1152–1161 (AGTSSQTMPT). Residues 1187–1191 (LNILL) carry the LXXLL motif 2 motif.

It belongs to the Mediator complex subunit 14 family. As to quaternary structure, component of the Mediator complex, which is composed of MED1, MED4, MED6, MED7, MED8, MED9, MED10, MED11, MED12, MED13, MED13L, MED14, MED15, MED16, MED17, MED18, MED19, MED20, MED21, MED22, MED23, MED24, MED25, MED26, MED27, MED29, MED30, MED31, CCNC, CDK8 and CDC2L6/CDK11. The MED12, MED13, CCNC and CDK8 subunits form a distinct module termed the CDK8 module. Mediator containing the CDK8 module is less active than Mediator lacking this module in supporting transcriptional activation. Individual preparations of the Mediator complex lacking one or more distinct subunits have been variously termed ARC, CRSP, DRIP, PC2, SMCC and TRAP. Interacts with AR, ESR1, SREBF1 and STAT2. Interacts with GATA1.

It localises to the nucleus. Functionally, component of the Mediator complex, a coactivator involved in the regulated transcription of nearly all RNA polymerase II-dependent genes. Mediator functions as a bridge to convey information from gene-specific regulatory proteins to the basal RNA polymerase II transcription machinery. Mediator is recruited to promoters by direct interactions with regulatory proteins and serves as a scaffold for the assembly of a functional preinitiation complex with RNA polymerase II and the general transcription factors. The protein is Mediator of RNA polymerase II transcription subunit 14 (Med14) of Mus musculus (Mouse).